An 84-amino-acid chain; its full sequence is Anaphase-promoting complex subunit 11 (84 aa).

The Zn(2+) site is built by C23, C26, C34, C37, C44, C51, H53, H56, H58, C59, C73, and C76. The RING-type zinc-finger motif lies at 34-77; sequence CPDCKVPGDDCPLVWGQCSHCFHMHCILKWLHAQQVQQHCPMCR.

The protein belongs to the RING-box family. In terms of assembly, the mammalian APC/C is composed at least of 14 distinct subunits ANAPC1, ANAPC2, CDC27/APC3, ANAPC4, ANAPC5, CDC16/APC6, ANAPC7, CDC23/APC8, ANAPC10, ANAPC11, CDC26/APC12, ANAPC13, ANAPC15 and ANAPC16 that assemble into a complex of at least 19 chains with a combined molecular mass of around 1.2 MDa; APC/C interacts with FZR1 and FBXO5. Interacts with the cullin domain of ANAPC2. Interacts with UBE2D2. Post-translationally, auto-ubiquitinated. Expressed at high levels in skeletal muscle and heart; in moderate levels in brain, kidney, and liver; and at low levels in colon, thymus, spleen, small intestine, placenta, lung and peripheral blood leukocyte.

It localises to the cytoplasm. Its subcellular location is the nucleus. The protein operates within protein modification; protein ubiquitination. Its function is as follows. Together with the cullin protein ANAPC2, constitutes the catalytic component of the anaphase promoting complex/cyclosome (APC/C), a cell cycle-regulated E3 ubiquitin ligase that controls progression through mitosis and the G1 phase of the cell cycle. The APC/C complex acts by mediating ubiquitination and subsequent degradation of target proteins: it mainly mediates the formation of 'Lys-11'-linked polyubiquitin chains and, to a lower extent, the formation of 'Lys-48'- and 'Lys-63'-linked polyubiquitin chains. The APC/C complex catalyzes assembly of branched 'Lys-11'-/'Lys-48'-linked branched ubiquitin chains on target proteins. May recruit the E2 ubiquitin-conjugating enzymes to the complex. The polypeptide is Anaphase-promoting complex subunit 11 (ANAPC11) (Homo sapiens (Human)).